A 261-amino-acid chain; its full sequence is CD40 ligand (261 aa).

Topologically, residues 1–22 (MIETYSQPSPRSVATGPPVSMK) are cytoplasmic. The chain crosses the membrane as a helical; Signal-anchor for type II membrane protein span at residues 23–46 (IFMYLLTVFLITQMIGSALFAVYL). Residues 47-261 (HRRLDKIEDE…GFTSFGLLKL (215 aa)) are Extracellular-facing. The region spanning 122–261 (IAAHVISEAS…GFTSFGLLKL (140 aa)) is the THD domain. Cys178 and Cys218 are oxidised to a cystine. The N-linked (GlcNAc...) asparagine glycan is linked to Asn240.

Belongs to the tumor necrosis factor family. In terms of assembly, homotrimer. Interacts with CD28. CD40 ligand, soluble form: Exists as either a monomer or a homotrimer. Forms a ternary complex between CD40 and integrins for CD40-CD40LG signaling. In terms of processing, the soluble form derives from the membrane form by proteolytic processing.

The protein resides in the cell membrane. It localises to the cell surface. Its subcellular location is the secreted. In terms of biological role, cytokine that acts as a ligand to CD40/TNFRSF5. Costimulates T-cell proliferation and cytokine production. Its cross-linking on T-cells generates a costimulatory signal which enhances the production of IL4 and IL10 in conjunction with the TCR/CD3 ligation and CD28 costimulation. Induces the activation of NF-kappa-B. Induces the activation of kinases MAPK8 and PAK2 in T-cells. Mediates B-cell proliferation in the absence of co-stimulus as well as IgE production in the presence of IL4. Involved in immunoglobulin class switching. Acts as a ligand for integrins, specifically ITGA5:ITGB1 and ITGAV:ITGB3; both integrins and the CD40 receptor are required for activation of CD40-CD40LG signaling, which have cell-type dependent effects, such as B-cell activation, NF-kappa-B signaling and anti-apoptotic signaling. This Bos taurus (Bovine) protein is CD40 ligand (CD40LG).